Reading from the N-terminus, the 319-residue chain is MKRIGVLTSGGDSPGMNAAIRAVVRKAIYHGLEVYGIYHGYAGLIAGQIKKLEIGDVGDIIHRGGTMLYTARCPEFKTLEGQLKGIEQLKKHGIEGLVVIGGDGSYQGAKKLTEHGYPCVGVPGTIDNDIPGTDFTIGFDTALNTVIDAIDKIRDTATSHERTYVIEVMGRHAGDIALWAGLAGGAESILIPEADYDMDEIVSRLKRGHERGKKHSIIIVAEGVGSGVDFGKRIEEATGLETRVTVLGHVQRGGSPTAFDRVLASRLGARAVELLIEGKGGRCVGIQNNQLVDHDIIEALAQTHTVDQKMYQLSKELSI.

Glycine 11 serves as a coordination point for ATP. 21-25 contributes to the ADP binding site; that stretch reads RAVVR. ATP-binding positions include 72–73 and 102–105; these read RC and GDGS. Aspartate 103 contacts Mg(2+). A substrate-binding site is contributed by 125–127; the sequence is TID. Residue aspartate 127 is the Proton acceptor of the active site. Arginine 154 contributes to the ADP binding site. Residues arginine 162 and 169–171 contribute to the substrate site; that span reads MGR. ADP contacts are provided by residues 185-187, arginine 211, and 213-215; these read GAE and KKH. Residues glutamate 222, arginine 243, and 249–252 each bind substrate; that span reads HVQR.

It belongs to the phosphofructokinase type A (PFKA) family. ATP-dependent PFK group I subfamily. Prokaryotic clade 'B1' sub-subfamily. Homotetramer. The cofactor is Mg(2+).

The protein resides in the cytoplasm. The enzyme catalyses beta-D-fructose 6-phosphate + ATP = beta-D-fructose 1,6-bisphosphate + ADP + H(+). It functions in the pathway carbohydrate degradation; glycolysis; D-glyceraldehyde 3-phosphate and glycerone phosphate from D-glucose: step 3/4. Allosterically activated by ADP and other diphosphonucleosides, and allosterically inhibited by phosphoenolpyruvate. Functionally, catalyzes the phosphorylation of D-fructose 6-phosphate to fructose 1,6-bisphosphate by ATP, the first committing step of glycolysis. This chain is ATP-dependent 6-phosphofructokinase, found in Anoxybacillus flavithermus (strain DSM 21510 / WK1).